A 138-amino-acid polypeptide reads, in one-letter code: Large ribosomal subunit protein bL17 (138 aa).

This sequence belongs to the bacterial ribosomal protein bL17 family. Part of the 50S ribosomal subunit. Contacts protein L32.

This Nitrobacter winogradskyi (strain ATCC 25391 / DSM 10237 / CIP 104748 / NCIMB 11846 / Nb-255) protein is Large ribosomal subunit protein bL17.